Reading from the N-terminus, the 564-residue chain is Dihydroxy-acid dehydratase (564 aa).

Position 51 (Cys51) interacts with [2Fe-2S] cluster. Residue Asp83 participates in Mg(2+) binding. Cys124 provides a ligand contact to [2Fe-2S] cluster. Mg(2+) contacts are provided by Asp125 and Lys126. N6-carboxylysine is present on Lys126. Cys196 is a [2Fe-2S] cluster binding site. Glu448 provides a ligand contact to Mg(2+). The active-site Proton acceptor is the Ser474.

This sequence belongs to the IlvD/Edd family. Homodimer. The cofactor is [2Fe-2S] cluster. It depends on Mg(2+) as a cofactor.

The catalysed reaction is (2R)-2,3-dihydroxy-3-methylbutanoate = 3-methyl-2-oxobutanoate + H2O. It catalyses the reaction (2R,3R)-2,3-dihydroxy-3-methylpentanoate = (S)-3-methyl-2-oxopentanoate + H2O. Its pathway is amino-acid biosynthesis; L-isoleucine biosynthesis; L-isoleucine from 2-oxobutanoate: step 3/4. It participates in amino-acid biosynthesis; L-valine biosynthesis; L-valine from pyruvate: step 3/4. Functionally, functions in the biosynthesis of branched-chain amino acids. Catalyzes the dehydration of (2R,3R)-2,3-dihydroxy-3-methylpentanoate (2,3-dihydroxy-3-methylvalerate) into 2-oxo-3-methylpentanoate (2-oxo-3-methylvalerate) and of (2R)-2,3-dihydroxy-3-methylbutanoate (2,3-dihydroxyisovalerate) into 2-oxo-3-methylbutanoate (2-oxoisovalerate), the penultimate precursor to L-isoleucine and L-valine, respectively. In Polynucleobacter asymbioticus (strain DSM 18221 / CIP 109841 / QLW-P1DMWA-1) (Polynucleobacter necessarius subsp. asymbioticus), this protein is Dihydroxy-acid dehydratase.